The following is a 491-amino-acid chain: UDP-glycosyltransferase 73C1 (491 aa).

Residues serine 292, serine 352–glutamine 354, histidine 369–glutamate 377, and phenylalanine 391–glutamine 394 contribute to the UDP-alpha-D-glucose site.

This sequence belongs to the UDP-glycosyltransferase family.

Functionally, involved in the O-glucosylation of trans-zeatin and dihydrozeatin. Also active in vitro on cis-zeatin, dihydrozeatin-9-N-Glc, and olomoucine. Can detoxify the explosive 2,4,6-trinitrotoluene in plant by forming O- or C-glucose conjugates. The protein is UDP-glycosyltransferase 73C1 (UGT73C1) of Arabidopsis thaliana (Mouse-ear cress).